Here is a 163-residue protein sequence, read N- to C-terminus: Nucleotide-binding protein Cla_1551 (163 aa).

The protein belongs to the YajQ family.

Nucleotide-binding protein. This chain is Nucleotide-binding protein Cla_1551, found in Campylobacter lari (strain RM2100 / D67 / ATCC BAA-1060).